Consider the following 140-residue polypeptide: Large ribosomal subunit protein uL11 (140 aa).

Belongs to the universal ribosomal protein uL11 family. As to quaternary structure, part of the ribosomal stalk of the 50S ribosomal subunit. Interacts with L10 and the large rRNA to form the base of the stalk. L10 forms an elongated spine to which L12 dimers bind in a sequential fashion forming a multimeric L10(L12)X complex. In terms of processing, one or more lysine residues are methylated.

In terms of biological role, forms part of the ribosomal stalk which helps the ribosome interact with GTP-bound translation factors. The chain is Large ribosomal subunit protein uL11 from Brachyspira hyodysenteriae (strain ATCC 49526 / WA1).